The sequence spans 160 residues: Transcription antitermination protein NusB (160 aa).

The protein belongs to the NusB family.

Functionally, involved in transcription antitermination. Required for transcription of ribosomal RNA (rRNA) genes. Binds specifically to the boxA antiterminator sequence of the ribosomal RNA (rrn) operons. This chain is Transcription antitermination protein NusB, found in Sinorhizobium medicae (strain WSM419) (Ensifer medicae).